Consider the following 359-residue polypeptide: Type-1 angiotensin II receptor A (359 aa).

The Extracellular segment spans residues 1-25; the sequence is MALNSSAEDGIKRIQDDCPKAGRHS. A glycan (N-linked (GlcNAc...) asparagine) is linked at Asn4. Residues Gln15 and Asp17 each coordinate angiotensin II. 2 disulfides stabilise this stretch: Cys18–Cys274 and Cys101–Cys180. A helical membrane pass occupies residues 26–55; it reads YIFVMIPTLYSIIFVVGIFGNSLVVIVIYF. The Cytoplasmic portion of the chain corresponds to 56-61; it reads YMKLKT. A helical transmembrane segment spans residues 62 to 89; sequence VASVFLLNLALADLCFLLTLPLWAVYTA. The Extracellular segment spans residues 90–98; sequence MEYRWPFGN. Residues 99–125 form a helical membrane-spanning segment; it reads HLCKIASASVSFNLYASVFLLTCLSID. Residues 126 to 141 lie on the Cytoplasmic side of the membrane; sequence RYLAIVHPMKSRLRRT. The helical transmembrane segment at 142–165 threads the bilayer; it reads MLVAKVTCIIIWLMAGLASLPAVI. Residues 166–190 lie on the Extracellular side of the membrane; the sequence is HRNVYFIENTNITVCAFHYESRNST. Residue Arg167 participates in angiotensin II binding. The N-linked (GlcNAc...) asparagine glycan is linked to Asn176. Angiotensin II is bound by residues Phe182, His183, and Tyr184. Asn188 is a glycosylation site (N-linked (GlcNAc...) asparagine). Residues 191–216 traverse the membrane as a helical segment; sequence LPIGLGLTKNILGFLFPFLIILTSYT. Residue Lys199 participates in angiotensin II binding. Topologically, residues 217-239 are cytoplasmic; it reads LIWKALKKAYEIQKNKPRNDDIF. A helical transmembrane segment spans residues 240 to 268; sequence RIIMAIVLFFFFSWVPHQIFTFLDVLIQL. The Extracellular portion of the chain corresponds to 269–278; the sequence is GVIHDCKISD. A helical transmembrane segment spans residues 279-304; sequence IVDTAMPITICIAYFNNCLNPLFYGF. Residues 305–359 are Cytoplasmic-facing; the sequence is LGKKFKKYFLQLLKYIPPKAKSHSSLSTKMSTLSYRPSDNMSSSAKKPASCFEVE. Residues 337–349 are compositionally biased toward polar residues; the sequence is LSYRPSDNMSSSA. The tract at residues 337–359 is disordered; the sequence is LSYRPSDNMSSSAKKPASCFEVE. The S-palmitoyl cysteine moiety is linked to residue Cys355.

This sequence belongs to the G-protein coupled receptor 1 family. Interacts with MAS1. Interacts with ARRB1. Interacts with FLNA (via filamin repeat 21); increases PKA-mediated phosphorylation of FLNA. Post-translationally, C-terminal Ser or Thr residues may be phosphorylated. Is expressed in the liver, kidney, aorta, lung, uterus, ovary, spleen, heart, adrenal gland, and vascular smooth muscle cell.

The protein resides in the cell membrane. Functionally, receptor for angiotensin II, a vasoconstricting peptide, which acts as a key regulator of blood pressure and sodium retention by the kidney. The activated receptor in turn couples to G-alpha proteins G(q) (GNAQ, GNA11, GNA14 or GNA15) and thus activates phospholipase C and increases the cytosolic Ca(2+) concentrations, which in turn triggers cellular responses such as stimulation of protein kinase C. The protein is Type-1 angiotensin II receptor A (Agtr1) of Rattus norvegicus (Rat).